The primary structure comprises 344 residues: Golgi-associated RAB2 interactor protein 1B (344 aa).

Positions Phe271–Ser293 are disordered.

The protein belongs to the GARIN family.

Its subcellular location is the golgi apparatus. In terms of biological role, RAB2B effector protein required for accurate acrosome formation and normal male fertility. In complex with RAB2A/RAB2B, seems to suppress excessive vesicle trafficking during acrosome formation. This chain is Golgi-associated RAB2 interactor protein 1B, found in Homo sapiens (Human).